The sequence spans 134 residues: Small ribosomal subunit protein uS9 (134 aa).

The interval 109 to 134 is disordered; that stretch reads DARRTEPHKPSKSSKGPRAKRQKSYR. Positions 118 to 134 are enriched in basic residues; that stretch reads PSKSSKGPRAKRQKSYR.

This sequence belongs to the universal ribosomal protein uS9 family.

The sequence is that of Small ribosomal subunit protein uS9 from Methanococcus maripaludis (strain C5 / ATCC BAA-1333).